The following is a 572-amino-acid chain: [Pyruvate dehydrogenase [acetyl-transferring]]-phosphatase 1, mitochondrial (572 aa).

Residues 95 to 122 (NTSGNINMPSPNPKGTETQKSQRSQNDQ) form a disordered region. A PPM-type phosphatase domain is found at 153–543 (RYDVAQLPSN…DDLTVTVAFF (391 aa)). Positions 197, 198, 424, and 480 each coordinate Mn(2+). Basic and acidic residues predominate over residues 470–480 (EAQRPAFRYKD). The interval 470 to 492 (EAQRPAFRYKDNNSSSPSGSNPE) is disordered. Over residues 481 to 491 (NNSSSPSGSNP) the composition is skewed to low complexity.

This sequence belongs to the PP2C family. Mg(2+) is required as a cofactor. It depends on Mn(2+) as a cofactor. Post-translationally, processed by mitochondrial inner membrane protease (IMP) complex and released to the intermembrane space.

It is found in the mitochondrion intermembrane space. The catalysed reaction is O-phospho-L-seryl-[pyruvate dehydrogenase E1 alpha subunit] + H2O = L-seryl-[pyruvate dehydrogenase E1 alpha subunit] + phosphate. Catalyzes the dephosphorylation and concomitant reactivation of the E1 alpha subunit (PDA1) of the pyruvate dehydrogenase complex. The protein is [Pyruvate dehydrogenase [acetyl-transferring]]-phosphatase 1, mitochondrial (PTC5) of Saccharomyces cerevisiae (strain ATCC 204508 / S288c) (Baker's yeast).